A 1857-amino-acid polypeptide reads, in one-letter code: Fer-1-like protein 6 (1857 aa).

The Cytoplasmic portion of the chain corresponds to 1–1824 (MFGLKVKKKR…YLIWKNYKKY (1824 aa)). A disordered region spans residues 15–63 (KGLILANKAAKDSQGDTEALQEEPSHQEGPRGDLVHDDASIFPVPSASP). A compositionally biased stretch (basic and acidic residues) spans 37 to 53 (EPSHQEGPRGDLVHDDA). C2 domains are found at residues 65–181 (RRSK…QFCN) and 225–356 (PIEK…DKGF). A compositionally biased stretch (basic and acidic residues) spans 426–447 (SKDKDSKSSKGKDKADKTEDGK). The tract at residues 426–469 (SKDKDSKSSKGKDKADKTEDGKSQQASNKTNSTEVEVESFDVPP) is disordered. Residues 448–459 (SQQASNKTNSTE) show a composition bias toward polar residues. 2 C2 domains span residues 810 to 937 (GTNH…RLCY) and 969 to 1099 (PVEP…LAPI). Ca(2+) is bound by residues Asp842, Asp848, Asp904, and Asp906. Disordered regions lie at residues 1101–1148 (QVDG…VVPD), 1161–1203 (PDSS…RTIA), and 1224–1246 (AQKA…PDEV). Residues 1113–1129 (DSLTATESSGAHSSSQD) are compositionally biased toward polar residues. A compositionally biased stretch (basic and acidic residues) spans 1178–1189 (PPKDGKPKDPRK). Over residues 1190 to 1200 (PSRRSTKRRKR) the composition is skewed to basic residues. The segment covering 1226–1245 (KAKERNPKGKKGNTEAKPDE) has biased composition (basic and acidic residues). 2 consecutive C2 domains span residues 1338–1457 (DSGQ…AICG) and 1578–1729 (DMPQ…KACD). Asp1372, Asp1378, Asp1427, Asp1429, and Asp1435 together coordinate Ca(2+). A helical transmembrane segment spans residues 1825–1845 (IIIAFILIILIIFLVLFIYTL). At 1846–1857 (PGAISRRIVVGS) the chain is on the extracellular side.

Belongs to the ferlin family. Ca(2+) serves as cofactor.

The protein resides in the membrane. The chain is Fer-1-like protein 6 (FER1L6) from Homo sapiens (Human).